A 370-amino-acid chain; its full sequence is Dual-specificity RNA methyltransferase RlmN (370 aa).

Catalysis depends on E93, which acts as the Proton acceptor. Positions 99–331 (DRKRGTLCVS…TRVRRTRGDD (233 aa)) constitute a Radical SAM core domain. A disulfide bridge links C106 with C336. Positions 113, 117, and 120 each coordinate [4Fe-4S] cluster. S-adenosyl-L-methionine-binding positions include 162–163 (GE), S194, 216–218 (SLH), and N293. C336 serves as the catalytic S-methylcysteine intermediate.

It belongs to the radical SAM superfamily. RlmN family. [4Fe-4S] cluster is required as a cofactor.

The protein resides in the cytoplasm. The enzyme catalyses adenosine(2503) in 23S rRNA + 2 reduced [2Fe-2S]-[ferredoxin] + 2 S-adenosyl-L-methionine = 2-methyladenosine(2503) in 23S rRNA + 5'-deoxyadenosine + L-methionine + 2 oxidized [2Fe-2S]-[ferredoxin] + S-adenosyl-L-homocysteine. The catalysed reaction is adenosine(37) in tRNA + 2 reduced [2Fe-2S]-[ferredoxin] + 2 S-adenosyl-L-methionine = 2-methyladenosine(37) in tRNA + 5'-deoxyadenosine + L-methionine + 2 oxidized [2Fe-2S]-[ferredoxin] + S-adenosyl-L-homocysteine. Functionally, specifically methylates position 2 of adenine 2503 in 23S rRNA and position 2 of adenine 37 in tRNAs. m2A2503 modification seems to play a crucial role in the proofreading step occurring at the peptidyl transferase center and thus would serve to optimize ribosomal fidelity. This is Dual-specificity RNA methyltransferase RlmN from Coxiella burnetii (strain RSA 493 / Nine Mile phase I).